The following is a 132-amino-acid chain: Small ribosomal subunit protein uS8 (132 aa).

This sequence belongs to the universal ribosomal protein uS8 family. In terms of assembly, part of the 30S ribosomal subunit. Contacts proteins S5 and S12.

One of the primary rRNA binding proteins, it binds directly to 16S rRNA central domain where it helps coordinate assembly of the platform of the 30S subunit. This is Small ribosomal subunit protein uS8 from Rhodopseudomonas palustris (strain BisA53).